Reading from the N-terminus, the 312-residue chain is Pseudouridine-5'-phosphate glycosidase 2 (312 aa).

The Proton donor role is filled by Glu31. Substrate is bound by residues Lys93 and Val113. Residue Asp145 coordinates Mn(2+). 147–149 (SAD) is a substrate binding site. The Nucleophile role is filled by Lys166.

The protein belongs to the pseudouridine-5'-phosphate glycosidase family. Homotrimer. Mn(2+) is required as a cofactor.

It carries out the reaction D-ribose 5-phosphate + uracil = psi-UMP + H2O. In terms of biological role, catalyzes the reversible cleavage of pseudouridine 5'-phosphate (PsiMP) to ribose 5-phosphate and uracil. Functions biologically in the cleavage direction, as part of a pseudouridine degradation pathway. The protein is Pseudouridine-5'-phosphate glycosidase 2 of Photorhabdus laumondii subsp. laumondii (strain DSM 15139 / CIP 105565 / TT01) (Photorhabdus luminescens subsp. laumondii).